The following is a 189-amino-acid chain: Large ribosomal subunit protein bL9 (189 aa).

This sequence belongs to the bacterial ribosomal protein bL9 family.

Binds to the 23S rRNA. In Brucella abortus (strain S19), this protein is Large ribosomal subunit protein bL9.